A 130-amino-acid polypeptide reads, in one-letter code: WAP four-disulfide core domain protein 3 (130 aa).

The signal sequence occupies residues 1 to 16 (MKALLALGFLASWVAA). 2 WAP domains span residues 17 to 61 (GEHA…RGDI) and 62 to 106 (EGGR…IPGL). 8 disulfide bridges follow: Cys-25–Cys-49, Cys-32–Cys-53, Cys-36–Cys-48, Cys-42–Cys-57, Cys-69–Cys-94, Cys-77–Cys-98, Cys-81–Cys-93, and Cys-87–Cys-102. A glycan (N-linked (GlcNAc...) asparagine) is linked at Asn-116.

Its subcellular location is the secreted. The polypeptide is WAP four-disulfide core domain protein 3 (Wfdc3) (Mus musculus (Mouse)).